A 219-amino-acid chain; its full sequence is dTTP/UTP pyrophosphatase (219 aa).

Catalysis depends on aspartate 79, which acts as the Proton acceptor.

The protein belongs to the Maf family. YhdE subfamily. Requires a divalent metal cation as cofactor.

It localises to the cytoplasm. The enzyme catalyses dTTP + H2O = dTMP + diphosphate + H(+). It carries out the reaction UTP + H2O = UMP + diphosphate + H(+). Nucleoside triphosphate pyrophosphatase that hydrolyzes dTTP and UTP. May have a dual role in cell division arrest and in preventing the incorporation of modified nucleotides into cellular nucleic acids. This Oleidesulfovibrio alaskensis (strain ATCC BAA-1058 / DSM 17464 / G20) (Desulfovibrio alaskensis) protein is dTTP/UTP pyrophosphatase.